Here is a 399-residue protein sequence, read N- to C-terminus: Dual-specificity RNA methyltransferase RlmN (399 aa).

The active-site Proton acceptor is Glu122. A Radical SAM core domain is found at 128–371 (ETDRGTLCVS…VRTPRGRDIL (244 aa)). Cysteines 135 and 374 form a disulfide. Positions 142, 146, and 149 each coordinate [4Fe-4S] cluster. Residues 200–201 (GE), Ser232, 254–256 (SLH), and Asn331 each bind S-adenosyl-L-methionine. Cys374 (S-methylcysteine intermediate) is an active-site residue.

It belongs to the radical SAM superfamily. RlmN family. Requires [4Fe-4S] cluster as cofactor.

The protein localises to the cytoplasm. The enzyme catalyses adenosine(2503) in 23S rRNA + 2 reduced [2Fe-2S]-[ferredoxin] + 2 S-adenosyl-L-methionine = 2-methyladenosine(2503) in 23S rRNA + 5'-deoxyadenosine + L-methionine + 2 oxidized [2Fe-2S]-[ferredoxin] + S-adenosyl-L-homocysteine. The catalysed reaction is adenosine(37) in tRNA + 2 reduced [2Fe-2S]-[ferredoxin] + 2 S-adenosyl-L-methionine = 2-methyladenosine(37) in tRNA + 5'-deoxyadenosine + L-methionine + 2 oxidized [2Fe-2S]-[ferredoxin] + S-adenosyl-L-homocysteine. Functionally, specifically methylates position 2 of adenine 2503 in 23S rRNA and position 2 of adenine 37 in tRNAs. m2A2503 modification seems to play a crucial role in the proofreading step occurring at the peptidyl transferase center and thus would serve to optimize ribosomal fidelity. The sequence is that of Dual-specificity RNA methyltransferase RlmN from Rhodopseudomonas palustris (strain TIE-1).